Here is a 263-residue protein sequence, read N- to C-terminus: Triosephosphate isomerase (263 aa).

Residue 10-12 participates in substrate binding; the sequence is NWK. The Electrophile role is filled by histidine 104. The active-site Proton acceptor is the glutamate 176. Substrate-binding positions include glycine 182, serine 221, and 242–243; that span reads GG.

This sequence belongs to the triosephosphate isomerase family. Homodimer.

The protein resides in the cytoplasm. The catalysed reaction is D-glyceraldehyde 3-phosphate = dihydroxyacetone phosphate. The protein operates within carbohydrate biosynthesis; gluconeogenesis. It participates in carbohydrate degradation; glycolysis; D-glyceraldehyde 3-phosphate from glycerone phosphate: step 1/1. Functionally, involved in the gluconeogenesis. Catalyzes stereospecifically the conversion of dihydroxyacetone phosphate (DHAP) to D-glyceraldehyde-3-phosphate (G3P). The sequence is that of Triosephosphate isomerase from Haemophilus influenzae (strain ATCC 51907 / DSM 11121 / KW20 / Rd).